Here is a 345-residue protein sequence, read N- to C-terminus: Nuclear distribution protein nudE-like 1 (345 aa).

Residues 28 to 190 are a coiled coil; the sequence is QSFQEARDEL…LAVRERQQEV (163 aa). Positions 56-166 are self-association; sequence VQAEQRNRDL…LDEKESLLVS (111 aa). Positions 64–189 are interaction with KATNB1; it reads DLQADNQRLK…ELAVRERQQE (126 aa). Residues 114 to 133 form a required for interaction with PAFAH1B1 region; the sequence is YVRELEQANDDLERAKRATI. Positions 175–345 are interaction with CENPF; that stretch reads RDLRQELAVR…SAPGMLPLSV (171 aa). Residues 189–256 are interaction with YWHAE; it reads EVTRKSAPSS…SARISALNIV (68 aa). The interaction with NEFL stretch occupies residues 191-345; that stretch reads TRKSAPSSPT…SAPGMLPLSV (155 aa). An interaction with KATNA1 region spans residues 195 to 256; that stretch reads APSSPTLDCE…SARISALNIV (62 aa). Residue Ser-215 is modified to Phosphoserine. Residue Thr-219 is modified to Phosphothreonine; by CDK1 and MAPK1. Position 231 is a phosphoserine (Ser-231). Residues 241-280 are interaction with DISC1; that stretch reads TSPLTPSARISALNIVGDLLRKVGALESKLAACRNFAKDQ. Ser-242 carries the phosphoserine; by CDK1 modification. Thr-245 is modified (phosphothreonine; by CDK1 and MAPK1). Residues 256 to 291 are required for localization to the centrosome and interaction with dynein, dynactin, tubulin gamma, PCM1 and PCNT; sequence VGDLLRKVGALESKLAACRNFAKDQASRKSYISGNV. Residue Cys-273 is the site of S-palmitoyl cysteine; by ZDHHC2, ZDHHC3 and ZDHHC7 attachment. The disordered stretch occupies residues 315–345; it reads GAVNGFDPAPPPPGLGSSRPSSAPGMLPLSV. Residues 329–339 are compositionally biased toward low complexity; that stretch reads LGSSRPSSAPG. The residue at position 344 (Ser-344) is a Phosphoserine.

The protein belongs to the nudE family. Interacts with PLEKHM1 (via N- and C-terminus). Interacts with YWHAE. Interacts directly with NEFL and indirectly with NEFH. Interacts with microtubules. Self-associates. Interacts with DISC1, dynein, dynactin, tubulin gamma, KATNA1, KATNB1, PAFAH1B1, PCM1 and PCNT. Interacts (via C-terminus) with CENPF. Interacts with ZNF365. Interacts with GTP-bound RAB9A; the interaction may lead to RAB9A-dynein motor tethering. In terms of processing, phosphorylated in mitosis. Can be phosphorylated by CDK1, CDK5 and MAPK1. Phosphorylation by CDK5 promotes interaction with KATNA1 and YWHAE. Palmitoylation at Cys-273 reduces affinity for dynein. Expressed in brain, heart, kidney, liver, lung, pancreas, placenta and skeletal muscle.

It localises to the cytoplasm. Its subcellular location is the cytoskeleton. The protein resides in the microtubule organizing center. The protein localises to the centrosome. It is found in the chromosome. It localises to the centromere. Its subcellular location is the kinetochore. The protein resides in the spindle. In terms of biological role, required for organization of the cellular microtubule array and microtubule anchoring at the centrosome. May regulate microtubule organization at least in part by targeting the microtubule severing protein KATNA1 to the centrosome. Also positively regulates the activity of the minus-end directed microtubule motor protein dynein. May enhance dynein-mediated microtubule sliding by targeting dynein to the microtubule plus ends. Required for several dynein- and microtubule-dependent processes such as the maintenance of Golgi integrity, the centripetal motion of secretory vesicles and the coupling of the nucleus and centrosome. Also required during brain development for the migration of newly formed neurons from the ventricular/subventricular zone toward the cortical plate. Plays a role, together with DISC1, in the regulation of neurite outgrowth. Required for mitosis in some cell types but appears to be dispensible for mitosis in cortical neuronal progenitors, which instead requires NDE1. Facilitates the polymerization of neurofilaments from the individual subunits NEFH and NEFL. Positively regulates lysosome peripheral distribution and ruffled border formation in osteoclasts. Plays a role, together with DISC1, in the regulation of neurite outgrowth. May act as a RAB9A/B effector that tethers RAB9-associated late endosomes to the dynein motor for their retrograde transport to the trans-Golgi network. In Homo sapiens (Human), this protein is Nuclear distribution protein nudE-like 1 (NDEL1).